The chain runs to 122 residues: Large ribosomal subunit protein uL14 (122 aa).

It belongs to the universal ribosomal protein uL14 family. As to quaternary structure, part of the 50S ribosomal subunit. Forms a cluster with proteins L3 and L19. In the 70S ribosome, L14 and L19 interact and together make contacts with the 16S rRNA in bridges B5 and B8.

Binds to 23S rRNA. Forms part of two intersubunit bridges in the 70S ribosome. This is Large ribosomal subunit protein uL14 from Mycoplasmopsis pulmonis (strain UAB CTIP) (Mycoplasma pulmonis).